The primary structure comprises 449 residues: Trigger factor (449 aa).

Positions 173 to 258 constitute a PPIase FKBP-type domain; it reads GDRVTVDFVG…LKKVEWPHLP (86 aa).

Belongs to the FKBP-type PPIase family. Tig subfamily.

Its subcellular location is the cytoplasm. It catalyses the reaction [protein]-peptidylproline (omega=180) = [protein]-peptidylproline (omega=0). In terms of biological role, involved in protein export. Acts as a chaperone by maintaining the newly synthesized protein in an open conformation. Functions as a peptidyl-prolyl cis-trans isomerase. The protein is Trigger factor of Burkholderia mallei (strain NCTC 10229).